Reading from the N-terminus, the 194-residue chain is Isopentenyl-diphosphate Delta-isomerase (194 aa).

Mn(2+) is bound by residues His23 and His30. One can recognise a Nudix hydrolase domain in the interval 28–162; it reads PLHLAFSCYV…TTDISPWCRQ (135 aa). Cys65 is an active-site residue. His67 provides a ligand contact to Mn(2+). Glu85 provides a ligand contact to Mg(2+). Residues Glu112 and Glu114 each contribute to the Mn(2+) site. Residue Glu114 is part of the active site.

It belongs to the IPP isomerase type 1 family. It depends on Mg(2+) as a cofactor. Requires Mn(2+) as cofactor.

Its subcellular location is the cytoplasm. The catalysed reaction is isopentenyl diphosphate = dimethylallyl diphosphate. It functions in the pathway isoprenoid biosynthesis; dimethylallyl diphosphate biosynthesis; dimethylallyl diphosphate from isopentenyl diphosphate: step 1/1. Catalyzes the 1,3-allylic rearrangement of the homoallylic substrate isopentenyl (IPP) to its highly electrophilic allylic isomer, dimethylallyl diphosphate (DMAPP). This chain is Isopentenyl-diphosphate Delta-isomerase, found in Saccharopolyspora erythraea (strain ATCC 11635 / DSM 40517 / JCM 4748 / NBRC 13426 / NCIMB 8594 / NRRL 2338).